The sequence spans 348 residues: Mitogen-activated protein kinase 14B (348 aa).

The region spanning 25-309 (YQNLSPVGSG…ASQALAHPYF (285 aa)) is the Protein kinase domain. Residues 31–39 (VGSGAYGSV) and Lys54 each bind ATP. Residue Asp169 is the Proton acceptor of the active site. The residue at position 181 (Thr181) is a Phosphothreonine; by MAP2K3. The TXY signature appears at 181 to 183 (TGY). The residue at position 183 (Tyr183) is a Phosphotyrosine; by MAP2K3.

This sequence belongs to the protein kinase superfamily. CMGC Ser/Thr protein kinase family. MAP kinase subfamily. It depends on Mg(2+) as a cofactor. In terms of processing, dually phosphorylated on Thr-181 and Tyr-183, which activates the enzyme.

The protein resides in the cytoplasm. Its subcellular location is the nucleus. The catalysed reaction is L-seryl-[protein] + ATP = O-phospho-L-seryl-[protein] + ADP + H(+). It catalyses the reaction L-threonyl-[protein] + ATP = O-phospho-L-threonyl-[protein] + ADP + H(+). Its activity is regulated as follows. Activated by threonine and tyrosine phosphorylation by the dual specificity kinase, MKK3. Its function is as follows. Serine/threonine kinase which acts as an essential component of the MAP kinase signal transduction pathway. Mapk14b is one of the four p38 MAPKs which play an important role in the cascades of cellular responses evoked by extracellular stimuli such as pro-inflammatory cytokines or physical stress leading to direct activation of transcription factors. Accordingly, p38 MAPKs phosphorylate a broad range of proteins and it has been estimated that they may have approximately 200 to 300 substrates each. Some of the targets are downstream kinases which are activated through phosphorylation and further phosphorylate additional targets. This chain is Mitogen-activated protein kinase 14B (mapk14b), found in Danio rerio (Zebrafish).